Consider the following 61-residue polypeptide: Large ribosomal subunit protein bL33 (61 aa).

This sequence belongs to the bacterial ribosomal protein bL33 family.

The sequence is that of Large ribosomal subunit protein bL33 from Amoebophilus asiaticus (strain 5a2).